A 533-amino-acid chain; its full sequence is RNA end formation protein 2 (533 aa).

3 disordered regions span residues 187–254 (SNST…SSMK), 260–279 (LFNK…SKKK), and 321–344 (SSST…PLKK). Positions 206 to 222 (KIKDSEKEKEKEKDKSK) are enriched in basic and acidic residues. Residues 242 to 252 (SSPSPTASTSS) show a composition bias toward low complexity. Residues 321-338 (SSSTSGSSTTTVATPASS) are compositionally biased toward low complexity.

As to quaternary structure, interacts with FIR1. Component of the cleavage and polyadenylation factor (CPF) complex, which is composed of PTI1, SYC1, SSU72, GLC7, MPE1, REF2, PFS2, PTA1, YSH1/BRR5, SWD2, CFT2/YDH1, YTH1, CFT1/YHH1, FIP1 and PAP1. Component of the APT complex, which is a subcomplex of CPF, and is composed of PTI1, SYC1, SSU72, GLC7, REF2, PTA1 and SWD2.

Its subcellular location is the nucleus. RNA-binding component of the cleavage and polyadenylation factor (CPF) complex, which plays a key role in polyadenylation-dependent pre-mRNA 3'-end formation and cooperates with cleavage factors including the CFIA complex and NAB4/CFIB. Negative regulator of poly(A) synthesis. Component of the APT complex, which may be involved in polyadenylation-independent transcript 3'-end formation. REF2 is required for 3'-end formation of snoRNAs. This Saccharomyces cerevisiae (strain ATCC 204508 / S288c) (Baker's yeast) protein is RNA end formation protein 2 (REF2).